The chain runs to 478 residues: Sporozoite surface protein P36p (478 aa).

The first 41 residues, 1–41 (MYVLVLIHMCYHFTMKRKKLFVYFIFLSFIINFNFNININF), serve as a signal peptide directing secretion. 6-Cys domains lie at 42–178 (VCSN…IKKT) and 181–326 (KIKG…FDNN). 6 cysteine pairs are disulfide-bonded: Cys-59/Cys-71, Cys-85/Cys-159, Cys-102/Cys-157, Cys-185/Cys-209, Cys-223/Cys-302, and Cys-243/Cys-300. Residues Asn-109 and Asn-138 are each glycosylated (N-linked (GlcNAc...) asparagine). Residues Asn-229, Asn-279, and Asn-291 are each glycosylated (N-linked (GlcNAc...) asparagine). The GPI-anchor amidated serine moiety is linked to residue Ser-455. The propeptide at 456-478 (SSKYILFNNFLILFIFLIYIYST) is removed in mature form.

Its subcellular location is the cell surface. It localises to the cell membrane. Involved in sporozoite infection of hepatocytes and replication therein. The chain is Sporozoite surface protein P36p (PF52) from Plasmodium falciparum (isolate 3D7).